The primary structure comprises 548 residues: Non-structural protein NS1 (548 aa).

It belongs to the orbivirus non-structural protein NS1 family.

The chain is Non-structural protein NS1 (Segment-5) from Camelus dromedarius (Dromedary).